The primary structure comprises 327 residues: tRNA uridine(34) hydroxylase (327 aa).

In terms of domain architecture, Rhodanese spans 123-217 (SDPEVLLVDT…YLEEVKQEES (95 aa)). Residue Cys177 is the Cysteine persulfide intermediate of the active site.

The protein belongs to the TrhO family.

It catalyses the reaction uridine(34) in tRNA + AH2 + O2 = 5-hydroxyuridine(34) in tRNA + A + H2O. Functionally, catalyzes oxygen-dependent 5-hydroxyuridine (ho5U) modification at position 34 in tRNAs. This Shewanella piezotolerans (strain WP3 / JCM 13877) protein is tRNA uridine(34) hydroxylase.